A 234-amino-acid chain; its full sequence is 2-amino-5-formylamino-6-ribosylaminopyrimidin-4(3H)-one 5'-monophosphate deformylase (234 aa).

Fe cation is bound by residues Glu-29, His-31, Asp-40, and His-109.

The protein belongs to the creatininase superfamily. FAPy deformylase family. Homodimer. The cofactor is Fe(2+). Zn(2+) serves as cofactor.

It catalyses the reaction 2-amino-5-formylamino-6-(5-phospho-D-ribosylamino)pyrimidin-4(3H)-one + H2O = 2,5-diamino-6-(1-D-ribosylamino)pyrimidin-4(3H)-one 5'-phosphate + formate + H(+). The protein operates within cofactor biosynthesis; coenzyme F420 biosynthesis. It participates in cofactor biosynthesis; riboflavin biosynthesis. Its function is as follows. Catalyzes the hydrolysis of the formamide of 2-amino-5-formylamino-6-ribosylamino-4(3H)-pyrimidinone 5'-monophosphate (FAPy) to form 2,5-diamino-6-ribosylamino-4(3H)-pyrimidinone 5'-phosphate (APy). In Methanobrevibacter ruminantium (strain ATCC 35063 / DSM 1093 / JCM 13430 / OCM 146 / M1) (Methanobacterium ruminantium), this protein is 2-amino-5-formylamino-6-ribosylaminopyrimidin-4(3H)-one 5'-monophosphate deformylase.